Reading from the N-terminus, the 259-residue chain is DNA adenine methylase (259 aa).

Residues Y7, K11, D50, and D171 each contribute to the S-adenosyl-L-methionine site.

It belongs to the N(4)/N(6)-methyltransferase family. In terms of assembly, monomer.

The enzyme catalyses a 2'-deoxyadenosine in DNA + S-adenosyl-L-methionine = an N(6)-methyl-2'-deoxyadenosine in DNA + S-adenosyl-L-homocysteine + H(+). Its function is as follows. An alpha subtpe methyltransferase that recognizes the double-stranded sequence 5'-GATC-3' and methylates A-2 on both strands. May prevent degradation of viral DNA by the host restriction-modification antiviral defense system. In Enterobacteria phage T2 (Bacteriophage T2), this protein is DNA adenine methylase.